A 568-amino-acid chain; its full sequence is MAAATATAGTAACSSSSSSRGGSTDAAATSGVQPPPPPPATAPPEPLRKPRMDPRRRQAALSFLTNISLDGRPPLQDHEWGGGEEGGGTKPGARARLSLLAAGCNAFSAPGTAAAPWTAGSGSSPCPLPPSLVPRVLGEPSQPPRSAPAVTGAQLQLPDGPGGAGQEELEEDDAFTNVQVPSASFLGSGTPGSTSGSRGRLNSFTQGILPIAFSRQNSQNYCALEQSGQGGSTSALEQLQRSRRRLISQRSSLETLEDIEENAPLRRCRTLSGSPRPKNFKKIHFIKNMRQHDTKNGRDLKLDGGRQSAGAMSLKEIIGLEGVELGADGKTVSYTQFLLPTNAFGNRRNTIDSTASFSQFRSLSHRSLSMGRAGSTQGSLDAGSDLGDFMDYDPNLLDDPQWPCGKHKRVLTFPSYMTTVIDYVKPSDLKKDMNETFKEKFPHIKLTLSKIRSLKREMRKLAQEDCGFEEPTVAMAFVYFEKLALRGKLNKQNRKLCAGACVLLAAKVGSDLRKHEVKHLIDKLEEKFRLNRRELIAFEFPVLVALEFALHLPEHEVMPHYRRLIQSS.

Residues 1–31 are compositionally biased toward low complexity; the sequence is MAAATATAGTAACSSSSSSRGGSTDAAATSG. 2 disordered regions span residues 1 to 94 and 130 to 169; these read MAAA…PGAR and PSLV…QEEL. Positions 1–98 are interaction with TDRD7; it reads MAAATATAGT…TKPGARARLS (98 aa). Residues 33–45 are compositionally biased toward pro residues; that stretch reads QPPPPPPATAPPE. Residues 46-56 are compositionally biased toward basic and acidic residues; sequence PLRKPRMDPRR. An interaction with CDK3 region spans residues 140-427; it reads PSQPPRSAPA…TTVIDYVKPS (288 aa). Serine 248 is subject to Phosphoserine. Serine 274 carries the phosphoserine; by CDK2 and CDK3 modification. Position 350 is a phosphothreonine (threonine 350).

This sequence belongs to the cyclin family. In terms of assembly, found in a complex with p53/TP53. Found in a number of complexes with CDK2, CDK3, CDK5, ABL1, TDRD7, CDK17, CCNA1, CCNE1 and TP73. Interacts with CDK2, CDK3, CDK5, ABL1 and TDRD7. Post-translationally, phosphorylated on Ser-274 by CCNE1/CDK3. Phosphorylated on serine/threonine residues by CDK5 and on tyrosine residues by ABL1. Also phosphorylated in vitro by CCNA1/CDK2, CCNE1/CDK2, CCNA1/CDK3 and CCNE1/CDK3. In terms of tissue distribution, ubiquitous. Expressed in postnatal day 1 (P1), in postmitotic neurons of the subplate, cortex (V/VI) and marginal zone; in postnatal day 7 (P7), in all layers of the cerebral cortex and in the CA1 and CA2 regions of the hippocampus (at protein level). Highly expressed in brain, kidney, liver and lung.

It localises to the nucleus. Its subcellular location is the cytoplasm. The protein resides in the cell projection. The protein localises to the growth cone. Cyclin-dependent kinase binding protein. Enhances cyclin-dependent kinase tyrosine phosphorylation by nonreceptor tyrosine kinases, such as that of CDK5 by activated ABL1, which leads to increased CDK5 activity and is critical for neuronal development, and that of CDK2 by WEE1, which leads to decreased CDK2 activity and growth inhibition. Positively affects neuronal outgrowth. Plays a role as a regulator for p53/p73-induced cell death. In Mus musculus (Mouse), this protein is CDK5 and ABL1 enzyme substrate 1 (Cables1).